A 202-amino-acid chain; its full sequence is 7-cyano-7-deazaguanine synthase 1 (202 aa).

7-17 is an ATP binding site; it reads MSGGLDSSSAA. The Zn(2+) site is built by Cys-166, Cys-174, Cys-177, and Cys-180.

Belongs to the QueC family. The cofactor is Zn(2+).

It catalyses the reaction 7-carboxy-7-deazaguanine + NH4(+) + ATP = 7-cyano-7-deazaguanine + ADP + phosphate + H2O + H(+). It participates in purine metabolism; 7-cyano-7-deazaguanine biosynthesis. In terms of biological role, catalyzes the ATP-dependent conversion of 7-carboxy-7-deazaguanine (CDG) to 7-cyano-7-deazaguanine (preQ(0)). In Sulfurisphaera tokodaii (strain DSM 16993 / JCM 10545 / NBRC 100140 / 7) (Sulfolobus tokodaii), this protein is 7-cyano-7-deazaguanine synthase 1 (queC1).